The chain runs to 267 residues: NAD kinase (267 aa).

D45 acts as the Proton acceptor in catalysis. Residues 45–46, 123–124, R149, D151, A186, and N226 contribute to the NAD(+) site; these read DG and NE.

This sequence belongs to the NAD kinase family. Requires a divalent metal cation as cofactor.

The protein resides in the cytoplasm. The catalysed reaction is NAD(+) + ATP = ADP + NADP(+) + H(+). In terms of biological role, involved in the regulation of the intracellular balance of NAD and NADP, and is a key enzyme in the biosynthesis of NADP. Catalyzes specifically the phosphorylation on 2'-hydroxyl of the adenosine moiety of NAD to yield NADP. The polypeptide is NAD kinase (Shouchella clausii (strain KSM-K16) (Alkalihalobacillus clausii)).